A 35-amino-acid polypeptide reads, in one-letter code: Tau/kappa-theraphotoxin-Pc1a (35 aa).

Intrachain disulfides connect Cys3-Cys17, Cys10-Cys22, and Cys16-Cys29. Phe35 bears the Phenylalanine amide mark.

This sequence belongs to the neurotoxin 10 (Hwtx-1) family. 62 (Vatx) subfamily. As to expression, expressed by the venom gland.

The protein localises to the secreted. Selectively activates mammalian TRPV1, the capsaicin receptor, a non-selective cation channel expressed by sensory neurons of the pain pathway. Is less potent than VaTx2 and VaTx3. Interacts with distinct regions of the channel than capsaicin, since it only acts on the extracellular face of the channel, and capsaicin binds to the cytosolic side. Also activates avian TRPV1, which is insensitive to capsaicin. Significantly inhibits potassium channels Kv2.1/KCNB1. In Psalmopoeus cambridgei (Trinidad chevron tarantula), this protein is Tau/kappa-theraphotoxin-Pc1a.